The following is a 148-amino-acid chain: Large ribosomal subunit protein uL13 (148 aa).

This sequence belongs to the universal ribosomal protein uL13 family. Part of the 50S ribosomal subunit.

This protein is one of the early assembly proteins of the 50S ribosomal subunit, although it is not seen to bind rRNA by itself. It is important during the early stages of 50S assembly. This Ureaplasma parvum serovar 3 (strain ATCC 27815 / 27 / NCTC 11736) protein is Large ribosomal subunit protein uL13.